Consider the following 429-residue polypeptide: Histidine--tRNA ligase (429 aa).

It belongs to the class-II aminoacyl-tRNA synthetase family. In terms of assembly, homodimer.

Its subcellular location is the cytoplasm. The enzyme catalyses tRNA(His) + L-histidine + ATP = L-histidyl-tRNA(His) + AMP + diphosphate + H(+). This is Histidine--tRNA ligase from Streptococcus pneumoniae (strain P1031).